We begin with the raw amino-acid sequence, 206 residues long: Probable N-acetyltransferase 14 (206 aa).

In terms of domain architecture, N-acetyltransferase spans 6–206 (LSVREMREDE…MLVREFSKDL (201 aa)). The chain crosses the membrane as a helical span at residues 57 to 77 (FILASFALALLLPVFLAVAAV).

It belongs to the camello family.

It is found in the membrane. Functionally, probable acetyltransferase that binds the 5'-GGACTACAG-3' sequence of coproporphyrinogen oxidase promoter. Able to activate transcription of a reporter construct in vitro. Probable acetyltransferase. In terms of biological role, may act as a transcription factor regulating the expression of coproporphyrinogen oxidase by binding to a promoter regulatory element. In Mus musculus (Mouse), this protein is Probable N-acetyltransferase 14 (Nat14).